Here is a 101-residue protein sequence, read N- to C-terminus: Ferredoxin-3 (101 aa).

4Fe-4S ferredoxin-type domains follow at residues 17-46 (YLMK…LHGL) and 70-100 (KVMA…HAAL). The [4Fe-4S] cluster site is built by Cys26, Cys29, Cys32, Cys36, Cys80, Cys83, Cys86, and Cys90.

Homodimer. The cofactor is [4Fe-4S] cluster.

Its function is as follows. Ferredoxins are iron-sulfur proteins that transfer electrons in a wide variety of metabolic reactions. The protein is Ferredoxin-3 (fdxB) of Rhodobacter capsulatus (Rhodopseudomonas capsulata).